The primary structure comprises 520 residues: GMP synthase [glutamine-hydrolyzing] (520 aa).

The Glutamine amidotransferase type-1 domain occupies 9 to 202; it reads HVLIVDFGSQ…THKIAGLKGD (194 aa). Residue cysteine 86 is the Nucleophile of the active site. Residues histidine 176 and glutamate 178 contribute to the active site. Residues 203 to 395 enclose the GMPS ATP-PPase domain; it reads WTMKAFREEA…LGLPPQFVGR (193 aa). 230-236 contributes to the ATP binding site; the sequence is SGGVDSS.

As to quaternary structure, homodimer.

It carries out the reaction XMP + L-glutamine + ATP + H2O = GMP + L-glutamate + AMP + diphosphate + 2 H(+). It functions in the pathway purine metabolism; GMP biosynthesis; GMP from XMP (L-Gln route): step 1/1. Its function is as follows. Catalyzes the synthesis of GMP from XMP. This chain is GMP synthase [glutamine-hydrolyzing], found in Phenylobacterium zucineum (strain HLK1).